A 226-amino-acid polypeptide reads, in one-letter code: Ribose-5-phosphate isomerase A (226 aa).

Residues threonine 25–threonine 28, aspartate 81–aspartate 84, and lysine 94–glycine 97 contribute to the substrate site. The Proton acceptor role is filled by glutamate 103. Lysine 121 contacts substrate.

Belongs to the ribose 5-phosphate isomerase family. In terms of assembly, homodimer.

It carries out the reaction aldehydo-D-ribose 5-phosphate = D-ribulose 5-phosphate. It participates in carbohydrate degradation; pentose phosphate pathway; D-ribose 5-phosphate from D-ribulose 5-phosphate (non-oxidative stage): step 1/1. Catalyzes the reversible conversion of ribose-5-phosphate to ribulose 5-phosphate. This Enterococcus faecalis (strain ATCC 700802 / V583) protein is Ribose-5-phosphate isomerase A.